Reading from the N-terminus, the 114-residue chain is Fumarate reductase subunit D (114 aa).

A run of 3 helical transmembrane segments spans residues I27–M47, I50–P70, and W94–L114.

This sequence belongs to the FrdD family. Part of an enzyme complex containing four subunits: a flavoprotein (FrdA), an iron-sulfur protein (FrdB), and two hydrophobic anchor proteins (FrdC and FrdD).

Its subcellular location is the cell inner membrane. Anchors the catalytic components of the fumarate reductase complex to the cell membrane, binds quinones. The protein is Fumarate reductase subunit D of Haemophilus ducreyi (strain 35000HP / ATCC 700724).